The sequence spans 383 residues: Succinyl-diaminopimelate desuccinylase (383 aa).

A Zn(2+)-binding site is contributed by H72. D74 is a catalytic residue. Residue D105 participates in Zn(2+) binding. The Proton acceptor role is filled by E137. Zn(2+) contacts are provided by E138, E167, and H352.

This sequence belongs to the peptidase M20A family. DapE subfamily. In terms of assembly, homodimer. Requires Zn(2+) as cofactor. Co(2+) serves as cofactor.

It catalyses the reaction N-succinyl-(2S,6S)-2,6-diaminopimelate + H2O = (2S,6S)-2,6-diaminopimelate + succinate. It functions in the pathway amino-acid biosynthesis; L-lysine biosynthesis via DAP pathway; LL-2,6-diaminopimelate from (S)-tetrahydrodipicolinate (succinylase route): step 3/3. In terms of biological role, catalyzes the hydrolysis of N-succinyl-L,L-diaminopimelic acid (SDAP), forming succinate and LL-2,6-diaminopimelate (DAP), an intermediate involved in the bacterial biosynthesis of lysine and meso-diaminopimelic acid, an essential component of bacterial cell walls. This is Succinyl-diaminopimelate desuccinylase from Ehrlichia ruminantium (strain Welgevonden).